Reading from the N-terminus, the 69-residue chain is Large ribosomal subunit protein uL29 (69 aa).

Belongs to the universal ribosomal protein uL29 family.

This is Large ribosomal subunit protein uL29 from Staphylococcus haemolyticus (strain JCSC1435).